The chain runs to 190 residues: Elongation factor P (190 aa).

This sequence belongs to the elongation factor P family.

It is found in the cytoplasm. It functions in the pathway protein biosynthesis; polypeptide chain elongation. Its function is as follows. Involved in peptide bond synthesis. Stimulates efficient translation and peptide-bond synthesis on native or reconstituted 70S ribosomes in vitro. Probably functions indirectly by altering the affinity of the ribosome for aminoacyl-tRNA, thus increasing their reactivity as acceptors for peptidyl transferase. In Amoebophilus asiaticus (strain 5a2), this protein is Elongation factor P.